A 3114-amino-acid chain; its full sequence is MSWALEEWKEGLPTRALQKIQELEGQLDKLKKEKQQRQFQLDSLEAALQKQKQKVENEKTEGTNLKRENQRLMEICESLEKTKQKISHELQVKESQVNFQEGQLNSGKKQIEKLEQELKRCKSELERSQQAAQSADVSLNPCNTPQKIFTTPLTPSQYYSGSKYEDLKEKYNKEVEERKRLEAEVKALQAKKASQTLPQATMNHRDIARHQASSSVFSWQQEKTPSHLSSNSQRTPIRRDFSASYFSGEQEVTPSRSTLQIGKRDANSSFFDNSSSPHLLDQLKAQNQELRNKINELELRLQGHEKEMKGQVNKFQELQLQLEKAKVELIEKEKVLNKCRDELVRTTAQYDQASTKYTALEQKLKKLTEDLSCQRQNAESARCSLEQKIKEKEKEFQEELSRQQRSFQTLDQECIQMKARLTQELQQAKNMHNVLQAELDKLTSVKQQLENNLEEFKQKLCRAEQAFQASQIKENELRRSMEEMKKENNLLKSHSEQKAREVCHLEAELKNIKQCLNQSQNFAEEMKAKNTSQETMLRDLQEKINQQENSLTLEKLKLAVADLEKQRDCSQDLLKKREHHIEQLNDKLSKTEKESKALLSALELKKKEYEELKEEKTLFSCWKSENEKLLTQMESEKENLQSKINHLETCLKTQQIKSHEYNERVRTLEMDRENLSVEIRNLHNVLDSKSVEVETQKLAYMELQQKAEFSDQKHQKEIENMCLKTSQLTGQVEDLEHKLQLLSNEIMDKDRCYQDLHAEYESLRDLLKSKDASLVTNEDHQRSLLAFDQQPAMHHSFANIIGEQGSMPSERSECRLEADQSPKNSAILQNRVDSLEFSLESQKQMNSDLQKQCEELVQIKGEIEENLMKAEQMHQSFVAETSQRISKLQEDTSAHQNVVAETLSALENKEKELQLLNDKVETEQAEIQELKKSNHLLEDSLKELQLLSETLSLEKKEMSSIISLNKREIEELTQENGTLKEINASLNQEKMNLIQKSESFANYIDEREKSISELSDQYKQEKLILLQRCEETGNAYEDLSQKYKAAQEKNSKLECLLNECTSLCENRKNELEQLKEAFAKEHQEFLTKLAFAEERNQNLMLELETVQQALRSEMTDNQNNSKSEAGGLKQEIMTLKEEQNKMQKEVNDLLQENEQLMKVMKTKHECQNLESEPIRNSVKERESERNQCNFKPQMDLEVKEISLDSYNAQLVQLEAMLRNKELKLQESEKEKECLQHELQTIRGDLETSNLQDMQSQEISGLKDCEIDAEEKYISGPHELSTSQNDNAHLQCSLQTTMNKLNELEKICEILQAEKYELVTELNDSRSECITATRKMAEEVGKLLNEVKILNDDSGLLHGELVEDIPGGEFGEQPNEQHPVSLAPLDESNSYEHLTLSDKEVQMHFAELQEKFLSLQSEHKILHDQHCQMSSKMSELQTYVDSLKAENLVLSTNLRNFQGDLVKEMQLGLEEGLVPSLSSSCVPDSSSLSSLGDSSFYRALLEQTGDMSLLSNLEGAVSANQCSVDEVFCSSLQEENLTRKETPSAPAKGVEELESLCEVYRQSLEKLEEKMESQGIMKNKEIQELEQLLSSERQELDCLRKQYLSENEQWQQKLTSVTLEMESKLAAEKKQTEQLSLELEVARLQLQGLDLSSRSLLGIDTEDAIQGRNESCDISKEHTSETTERTPKHDVHQICDKDAQQDLNLDIEKITETGAVKPTGECSGEQSPDTNYEPPGEDKTQGSSECISELSFSGPNALVPMDFLGNQEDIHNLQLRVKETSNENLRLLHVIEDRDRKVESLLNEMKELDSKLHLQEVQLMTKIEACIELEKIVGELKKENSDLSEKLEYFSCDHQELLQRVETSEGLNSDLEMHADKSSREDIGDNVAKVNDSWKERFLDVENELSRIRSEKASIEHEALYLEADLEVVQTEKLCLEKDNENKQKVIVCLEEELSVVTSERNQLRGELDTMSKKTTALDQLSEKMKEKTQELESHQSECLHCIQVAEAEVKEKTELLQTLSSDVSELLKDKTHLQEKLQSLEKDSQALSLTKCELENQIAQLNKEKELLVKESESLQARLSESDYEKLNVSKALEAALVEKGEFALRLSSTQEEVHQLRRGIEKLRVRIEADEKKQLHIAEKLKERERENDSLKDKVENLERELQMSEENQELVILDAENSKAEVETLKTQIEEMARSLKVFELDLVTLRSEKENLTKQIQEKQGQLSELDKLLSSFKSLLEEKEQAEIQIKEESKTAVEMLQNQLKELNEAVAALCGDQEIMKATEQSLDPPIEEEHQLRNSIEKLRARLEADEKKQLCVLQQLKESEHHADLLKGRVENLERELEIARTNQEHAALEAENSKGEVETLKAKIEGMTQSLRGLELDVVTIRSEKENLTNELQKEQERISELEIINSSFENILQEKEQEKVQMKEKSSTAMEMLQTQLKELNERVAALHNDQEACKAKEQNLSSQVECLELEKAQLLQGLDEAKNNYIVLQSSVNGLIQEVEDGKQKLEKKDEEISRLKNQIQDQEQLVSKLSQVEGEHQLWKEQNLELRNLTVELEQKIQVLQSKNASLQDTLEVLQSSYKNLENELELTKMDKMSFVEKVNKMTAKETELQREMHEMAQKTAELQEELSGEKNRLAGELQLLLEEIKSSKDQLKELTLENSELKKSLDCMHKDQVEKEGKVREEIAEYQLRLHEAEKKHQALLLDTNKQYEVEIQTYREKLTSKEECLSSQKLEIDLLKSSKEELNNSLKATTQILEELKKTKMDNLKYVNQLKKENERAQGKMKLLIKSCKQLEEEKEILQKELSQLQAAQEKQKTGTVMDTKVDELTTEIKELKETLEEKTKEADEYLDKYCSLLISHEKLEKAKEMLETQVAHLCSQQSKQDSRGSPLLGPVVPGPSPIPSVTEKRLSSGQNKASGKRQRSSGIWENGRGPTPATPESFSKKSKKAVMSGIHPAEDTEGTEFEPEGLPEVVKKGFADIPTGKTSPYILRRTTMATRTSPRLAAQKLALSPLSLGKENLAESSKPTAGGSRSQKVKVAQRSPVDSGTILREPTTKSVPVNNLPERSPTDSPREGLRVKRGRLVPSPKAGLESNGSENCKVQ.

An interaction with SNAP25 and required for localization to the cytoplasm region spans residues 1–481 (MSWALEEWKE…IKENELRRSM (481 aa)). A coiled-coil region spans residues 13 to 131 (PTRALQKIQE…KSELERSQQA (119 aa)). Residue Ser-106 is modified to Phosphoserine. Residues Thr-144, Thr-151, and Thr-154 each carry the phosphothreonine modification. Tyr-158 carries the post-translational modification Phosphotyrosine. Residues 211 to 235 (QASSSVFSWQQEKTPSHLSSNSQRT) are compositionally biased toward polar residues. The disordered stretch occupies residues 211–236 (QASSSVFSWQQEKTPSHLSSNSQRTP). Ser-242 and Ser-276 each carry phosphoserine. Positions 280–685 (LDQLKAQNQE…SVEIRNLHNV (406 aa)) form a coiled coil. Phosphoserine is present on residues Ser-773, Ser-783, Ser-821, Ser-834, Ser-838, and Ser-876. Coiled coils occupy residues 899 to 989 (VAET…LNQE) and 1196 to 1244 (LEVK…IRGD). A phosphoserine mark is found at Ser-1248, Ser-1255, and Ser-1259. Residues 1549–1646 (VEELESLCEV…ELEVARLQLQ (98 aa)) adopt a coiled-coil conformation. Phosphoserine is present on residues Ser-1651, Ser-1652, and Ser-1654. Disordered regions lie at residues 1667 to 1690 (RNES…KHDV) and 1710 to 1746 (TETG…SECI). A compositionally biased stretch (basic and acidic residues) spans 1669 to 1690 (ESCDISKEHTSETTERTPKHDV). The residue at position 1726 (Ser-1726) is a Phosphoserine. Thr-1862 bears the Phosphothreonine mark. 2 positions are modified to phosphoserine: Ser-1868 and Ser-1892. Coiled coils occupy residues 1890 to 2078 (NDSW…LQAR) and 2107 to 2891 (LSST…LCSQ). The interaction with NDE1 and NDEL1 stretch occupies residues 2026 to 2351 (LLKDKTHLQE…ERELEIARTN (326 aa)). Tandem repeats lie at residues 2111-2290 (QEEV…QSLD) and 2293-2472 (IEEE…QNLS). Residues 2111–2472 (QEEVHQLRRG…ACKAKEQNLS (362 aa)) are 2 X 177 AA tandem repeats. The sufficient for self-association stretch occupies residues 2392 to 2829 (SEKENLTNEL…QAAQEKQKTG (438 aa)). The sufficient for centromere localization stretch occupies residues 2392 to 3017 (SEKENLTNEL…ATRTSPRLAA (626 aa)). 2 positions are modified to phosphoserine: Ser-2416 and Ser-2417. An N6-acetyllysine modification is found at Lys-2779. A sufficient for nuclear localization region spans residues 2831–3017 (VMDTKVDELT…ATRTSPRLAA (187 aa)). Positions 2891 to 2977 (QQSKQDSRGS…AEDTEGTEFE (87 aa)) are disordered. Residues Ser-2900, Ser-2911, Ser-2922, and Ser-2936 each carry the phosphoserine modification. Residues 2919–2936 (KRLSSGQNKASGKRQRSS) carry the Nuclear localization signal motif. The residue at position 2949 (Thr-2949) is a Phosphothreonine. Residues Ser-2952, Ser-2998, Ser-3023, and Ser-3026 each carry the phosphoserine modification. The disordered stretch occupies residues 3024-3114 (PLSLGKENLA…SNGSENCKVQ (91 aa)). The span at 3033-3045 (AESSKPTAGGSRS) shows a compositional bias: polar residues. Phosphoserine occurs at positions 3054, 3079, and 3083. Residues 3079–3089 (SPTDSPREGLR) are compositionally biased toward basic and acidic residues. Residues 3105 to 3114 (SNGSENCKVQ) are compositionally biased toward polar residues. Cys-3111 carries the post-translational modification Cysteine methyl ester. Cys-3111 carries the S-farnesyl cysteine lipid modification. Residues 3112 to 3114 (KVQ) constitute a propeptide, removed in mature form.

The protein belongs to the centromere protein F family. As to quaternary structure, interacts with and STX4 (via C-terminus). Interacts (via N-terminus) with RBL1, RBL2 and SNAP25. Self-associates. Interacts with CENP-E and BUBR1 (via C-terminus). Interacts (via C-terminus) with NDE1, NDEL1 and RB1. Hyperphosphorylated during mitosis.

It is found in the cytoplasm. The protein resides in the perinuclear region. Its subcellular location is the nucleus matrix. It localises to the chromosome. The protein localises to the centromere. It is found in the kinetochore. The protein resides in the cytoskeleton. Its subcellular location is the spindle. Required for kinetochore function and chromosome segregation in mitosis. Required for kinetochore localization of dynein, LIS1, NDE1 and NDEL1. Regulates recycling of the plasma membrane by acting as a link between recycling vesicles and the microtubule network though its association with STX4 and SNAP25. Acts as a potential inhibitor of pocket protein-mediated cellular processes during development by regulating the activity of RB proteins during cell division and proliferation. May play a regulatory or permissive role in the normal embryonic cardiomyocyte cell cycle and in promoting continued mitosis in transformed, abnormally dividing neonatal cardiomyocytes. Interaction with RB directs embryonic stem cells toward a cardiac lineage. Involved in the regulation of DNA synthesis and hence cell cycle progression, via its C-terminus. Has a potential role regulating skeletal myogenesis and in cell differentiation in embryogenesis. Involved in dendritic cell regulation of T-cell immunity against chlamydia. The chain is Centromere protein F (CENPF) from Homo sapiens (Human).